Consider the following 481-residue polypeptide: Glutamyl-tRNA(Gln) amidotransferase subunit A (481 aa).

Residues Lys-77 and Ser-151 each act as charge relay system in the active site. The active-site Acyl-ester intermediate is Ser-175.

It belongs to the amidase family. GatA subfamily. As to quaternary structure, heterotrimer of A, B and C subunits.

The catalysed reaction is L-glutamyl-tRNA(Gln) + L-glutamine + ATP + H2O = L-glutaminyl-tRNA(Gln) + L-glutamate + ADP + phosphate + H(+). Allows the formation of correctly charged Gln-tRNA(Gln) through the transamidation of misacylated Glu-tRNA(Gln) in organisms which lack glutaminyl-tRNA synthetase. The reaction takes place in the presence of glutamine and ATP through an activated gamma-phospho-Glu-tRNA(Gln). The protein is Glutamyl-tRNA(Gln) amidotransferase subunit A of Rubrobacter xylanophilus (strain DSM 9941 / JCM 11954 / NBRC 16129 / PRD-1).